The chain runs to 265 residues: Protein B8 (265 aa).

The sequence is that of Protein B8 (B8) from Homo sapiens (Human).